The sequence spans 180 residues: Adenine phosphoribosyltransferase (180 aa).

This sequence belongs to the purine/pyrimidine phosphoribosyltransferase family. In terms of assembly, homodimer.

It localises to the cytoplasm. The catalysed reaction is AMP + diphosphate = 5-phospho-alpha-D-ribose 1-diphosphate + adenine. The protein operates within purine metabolism; AMP biosynthesis via salvage pathway; AMP from adenine: step 1/1. In terms of biological role, catalyzes a salvage reaction resulting in the formation of AMP, that is energically less costly than de novo synthesis. The protein is Adenine phosphoribosyltransferase of Marinomonas sp. (strain MWYL1).